Reading from the N-terminus, the 437-residue chain is Aspartokinase (437 aa).

This sequence belongs to the aspartokinase family.

The enzyme catalyses L-aspartate + ATP = 4-phospho-L-aspartate + ADP. Its pathway is amino-acid biosynthesis; L-lysine biosynthesis via DAP pathway; (S)-tetrahydrodipicolinate from L-aspartate: step 1/4. The protein operates within amino-acid biosynthesis; L-methionine biosynthesis via de novo pathway; L-homoserine from L-aspartate: step 1/3. It functions in the pathway amino-acid biosynthesis; L-threonine biosynthesis; L-threonine from L-aspartate: step 1/5. The chain is Aspartokinase (lysC) from Chlamydia muridarum (strain MoPn / Nigg).